A 410-amino-acid chain; its full sequence is Angiopoietin-related protein 4 (410 aa).

An N-terminal signal peptide occupies residues 1–23; the sequence is MRCAPTAGAALMLCAATAGLLSA. A disordered region spans residues 81–106; the sequence is KDPEGSAAPPRAQANLVNPGGGDASP. Residues 107-155 adopt a coiled-coil conformation; the sequence is ETLRSLKTQLEAQNSRIQQLFQKVAQQQRHLEKQQLRIQNLQSQMDHLA. N184 carries an N-linked (GlcNAc...) asparagine glycan. Residues 186 to 408 enclose the Fibrinogen C-terminal domain; that stretch reads SRLHRLPRDC…ATTILVQPTA (223 aa). 2 disulfide bridges follow: C195/C223 and C348/C361.

Homooligomer; disulfide-linked via Cys residues in the N-terminal part of the protein. The homooligomer undergoes proteolytic processing to release the ANGPTL4 C-terminal chain, which circulates as a monomer. The homooligomer unprocessed form is able to interact with the extracellular matrix. In terms of processing, N-glycosylated. Forms disulfide-linked dimers and tetramers. Post-translationally, cleaved into a smaller N-terminal chain and a larger chain that contains the fibrinogen C-terminal domain; both cleaved and uncleaved forms are detected in the extracellular space. The cleaved form is not present within the cell.

It is found in the secreted. The protein localises to the extracellular space. It localises to the extracellular matrix. Functionally, mediates inactivation of the lipoprotein lipase LPL, and thereby plays a role in the regulation of triglyceride clearance from the blood serum and in lipid metabolism. May also play a role in regulating glucose homeostasis and insulin sensitivity. Inhibits proliferation, migration, and tubule formation of endothelial cells and reduces vascular leakage. Upon heterologous expression, inhibits the adhesion of endothelial cell to the extracellular matrix (ECM), and inhibits the reorganization of the actin cytoskeleton, formation of actin stress fibers and focal adhesions in endothelial cells that have adhered to ANGPTL4-containing ECM (in vitro). Depending on context, may modulate tumor-related angiogenesis. Mediates inactivation of the lipoprotein lipase LPL, and thereby plays an important role in the regulation of triglyceride clearance from the blood serum and in lipid metabolism. Has higher activity in LPL inactivation than the uncleaved protein. The polypeptide is Angiopoietin-related protein 4 (ANGPTL4) (Bos taurus (Bovine)).